Reading from the N-terminus, the 98-residue chain is ATP-dependent Clp protease adapter protein ClpS (98 aa).

This sequence belongs to the ClpS family. Binds to the N-terminal domain of the chaperone ClpA.

In terms of biological role, involved in the modulation of the specificity of the ClpAP-mediated ATP-dependent protein degradation. This Synechocystis sp. (strain ATCC 27184 / PCC 6803 / Kazusa) protein is ATP-dependent Clp protease adapter protein ClpS.